The chain runs to 116 residues: Ribosome-binding factor A (116 aa).

Belongs to the RbfA family. As to quaternary structure, monomer. Binds 30S ribosomal subunits, but not 50S ribosomal subunits or 70S ribosomes.

It localises to the cytoplasm. In terms of biological role, one of several proteins that assist in the late maturation steps of the functional core of the 30S ribosomal subunit. Associates with free 30S ribosomal subunits (but not with 30S subunits that are part of 70S ribosomes or polysomes). Required for efficient processing of 16S rRNA. May interact with the 5'-terminal helix region of 16S rRNA. This Streptococcus pyogenes serotype M5 (strain Manfredo) protein is Ribosome-binding factor A.